A 337-amino-acid chain; its full sequence is Large ribosomal subunit protein uL3 (337 aa).

Positions 1–29 (MARHHQPRKGSVAFSPRKRAARETPRVKS) are disordered.

It belongs to the universal ribosomal protein uL3 family. Part of the 50S ribosomal subunit. Forms a cluster with proteins L14 and L24e.

In terms of biological role, one of the primary rRNA binding proteins, it binds directly near the 3'-end of the 23S rRNA, where it nucleates assembly of the 50S subunit. The chain is Large ribosomal subunit protein uL3 from Methanothermobacter thermautotrophicus (strain ATCC 29096 / DSM 1053 / JCM 10044 / NBRC 100330 / Delta H) (Methanobacterium thermoautotrophicum).